The chain runs to 377 residues: MKIDYYEALGVTRTADDKTLKAAFRKLAMQYHPDRNPDDPEAERKFKEIGEAYETLKDPQKRAAYDRFGHAAFENGGMGGGFGNGFGGAGGFADIFEDIFGEMMGGGRRRSNGGRERGADLRYNMEVTLEEAYAGKTAQIRVPTSITCDECSGSGAKPGSQPTTCTMCSGSGRVRAAQGFFSVERTCPGCNGRGQIIKDPCEKCHGQGRVTQERSLSVNIPAGIEDGTRIRLAGEGEAGLRGGPAGDLYIFLSVKPHEFFQRDGADLYCKVPISMTTAALGGQFEVSTLDGTQTRVKVPEGTQNGKQFRLKGKGMPVLRQSVTGDLYIQIDIETPQNLSKRQRELLEEFEKLSSQENSPKSAGFFSRMKEFFEGIGE.

The J domain occupies 4-69; it reads DYYEALGVTR…QKRAAYDRFG (66 aa). The segment at 135 to 213 adopts a CR-type zinc-finger fold; sequence GKTAQIRVPT…CHGQGRVTQE (79 aa). Residues Cys-148, Cys-151, Cys-165, Cys-168, Cys-187, Cys-190, Cys-201, and Cys-204 each coordinate Zn(2+). 4 CXXCXGXG motif repeats span residues 148 to 155, 165 to 172, 187 to 194, and 201 to 208; these read CDECSGSG, CTMCSGSG, CPGCNGRG, and CEKCHGQG.

This sequence belongs to the DnaJ family. In terms of assembly, homodimer. Requires Zn(2+) as cofactor.

It is found in the cytoplasm. Its function is as follows. Participates actively in the response to hyperosmotic and heat shock by preventing the aggregation of stress-denatured proteins and by disaggregating proteins, also in an autonomous, DnaK-independent fashion. Unfolded proteins bind initially to DnaJ; upon interaction with the DnaJ-bound protein, DnaK hydrolyzes its bound ATP, resulting in the formation of a stable complex. GrpE releases ADP from DnaK; ATP binding to DnaK triggers the release of the substrate protein, thus completing the reaction cycle. Several rounds of ATP-dependent interactions between DnaJ, DnaK and GrpE are required for fully efficient folding. Also involved, together with DnaK and GrpE, in the DNA replication of plasmids through activation of initiation proteins. In Brucella canis (strain ATCC 23365 / NCTC 10854 / RM-666), this protein is Chaperone protein DnaJ.